The primary structure comprises 218 residues: Deoxyribose-phosphate aldolase (218 aa).

Catalysis depends on aspartate 92, which acts as the Proton donor/acceptor. Lysine 155 functions as the Schiff-base intermediate with acetaldehyde in the catalytic mechanism. The active-site Proton donor/acceptor is lysine 184.

This sequence belongs to the DeoC/FbaB aldolase family. DeoC type 1 subfamily.

The protein resides in the cytoplasm. It carries out the reaction 2-deoxy-D-ribose 5-phosphate = D-glyceraldehyde 3-phosphate + acetaldehyde. The protein operates within carbohydrate degradation; 2-deoxy-D-ribose 1-phosphate degradation; D-glyceraldehyde 3-phosphate and acetaldehyde from 2-deoxy-alpha-D-ribose 1-phosphate: step 2/2. Functionally, catalyzes a reversible aldol reaction between acetaldehyde and D-glyceraldehyde 3-phosphate to generate 2-deoxy-D-ribose 5-phosphate. In Clostridium kluyveri (strain NBRC 12016), this protein is Deoxyribose-phosphate aldolase.